The primary structure comprises 267 residues: MTSKDEAKSSASSVEERRRNALDLLPPPANSNKPLTPFSIEDILNKPSVRRSYTICGTAHLLSSADKPPAAGLPLSSRALLSQTSPLCALEELASKTFKGLEVSVLQAAEGRDGMTIFGQRQTPKKRRKSRTAFTNHQIYELEKRFLYQKYLSPADRDQIAQQLGLTNAQVITWFQNRRAKLKRDLEEMKADVESTKKMSPSAVEAVLTISELEESGSERGNSRSRSPQLGLTSNHMPLSPSXPLTDQHASKECSEDEEDVEIDVDD.

A compositionally biased stretch (basic and acidic residues) spans 1-21 (MTSKDEAKSSASSVEERRRNA). The segment at 1–36 (MTSKDEAKSSASSVEERRRNALDLLPPPANSNKPLT) is disordered. The segment at residues 127–186 (RRKSRTAFTNHQIYELEKRFLYQKYLSPADRDQIAQQLGLTNAQVITWFQNRRAKLKRDL) is a DNA-binding region (homeobox). The disordered stretch occupies residues 211-267 (SELEESGSERGNSRSRSPQLGLTSNHMPLSPSXPLTDQHASKECSEDEEDVEIDVDD). Residues 228–237 (PQLGLTSNHM) are compositionally biased toward polar residues. Over residues 255–267 (SEDEEDVEIDVDD) the composition is skewed to acidic residues.

As to expression, expressed in all myoblasts that will populate body wall muscles as well as in a group of cells the migrate into the head.

The protein localises to the nucleus. Its function is as follows. Transcription factor that controls hypaxial muscle development by down-regulating myod1 and cdkn1b/p27, thereby allowing myoblasts to proliferate before the onset of terminal differentiation. The chain is Transcription factor LBX1 from Xenopus laevis (African clawed frog).